A 1053-amino-acid polypeptide reads, in one-letter code: Middle cell wall protein (1053 aa).

A signal peptide spans 1-23 (MKKVVNSVLASALALTVAPMAFA). SLH domains are found at residues 26-89 (EAAT…KLAQ), 90-153 (FSNT…KGVW), and 154-203 (PNSM…FGTD).

The middle cell wall layer is composed of subunits of the middle cell wall protein. These proteins form a hexagonal array with a lattice constant of 14.5 nM in the middle cell wall layers.

It localises to the secreted. The protein localises to the cell wall. It is found in the S-layer. In terms of biological role, the middle wall protein binds to peptidoglycan and to the outer cell wall protein. This Brevibacillus brevis (strain 47 / JCM 6285 / NBRC 100599) protein is Middle cell wall protein.